Here is an 847-residue protein sequence, read N- to C-terminus: Alanine--tRNA ligase (847 aa).

The Zn(2+) site is built by H554, H558, C656, and H660.

This sequence belongs to the class-II aminoacyl-tRNA synthetase family. It depends on Zn(2+) as a cofactor.

It localises to the cytoplasm. The catalysed reaction is tRNA(Ala) + L-alanine + ATP = L-alanyl-tRNA(Ala) + AMP + diphosphate. Its function is as follows. Catalyzes the attachment of alanine to tRNA(Ala) in a two-step reaction: alanine is first activated by ATP to form Ala-AMP and then transferred to the acceptor end of tRNA(Ala). Also edits incorrectly charged Ser-tRNA(Ala) and Gly-tRNA(Ala) via its editing domain. This chain is Alanine--tRNA ligase, found in Helicobacter acinonychis (strain Sheeba).